We begin with the raw amino-acid sequence, 432 residues long: ATP-dependent RNA helicase RhlB (432 aa).

The Q motif signature appears at 9-37; that stretch reads QNFADLGLQPQVIDGLNAKGFIKCTPIQA. Positions 40 to 219 constitute a Helicase ATP-binding domain; sequence LPVLLAGQDI…FEHMQEPEHV (180 aa). 53–60 provides a ligand contact to ATP; that stretch reads AQTGTGKT. Residues 165–168 carry the DEAD box motif; that stretch reads DEAD. A Helicase C-terminal domain is found at 245 to 390; it reads ALLQTLIEEE…QSDYDASALL (146 aa). Residues 396 to 432 are disordered; it reads PLRLQRRPQQNRRNNNGQRQGGNRKHTRPRQPRNTQS. A compositionally biased stretch (basic residues) spans 417-426; it reads GNRKHTRPRQ.

It belongs to the DEAD box helicase family. RhlB subfamily. In terms of assembly, component of the RNA degradosome, which is a multiprotein complex involved in RNA processing and mRNA degradation.

It localises to the cytoplasm. It catalyses the reaction ATP + H2O = ADP + phosphate + H(+). In terms of biological role, DEAD-box RNA helicase involved in RNA degradation. Has RNA-dependent ATPase activity and unwinds double-stranded RNA. This Aliivibrio fischeri (strain ATCC 700601 / ES114) (Vibrio fischeri) protein is ATP-dependent RNA helicase RhlB.